Reading from the N-terminus, the 291-residue chain is HTH-type transcriptional activator AmpR (291 aa).

The HTH lysR-type domain occupies 6-63 (LPLNSLRAFEAAARHLSFTHAAIELNVTHSAISQHVKTLEQHLNCQLFVRVSRGLMLT). A DNA-binding region (H-T-H motif) is located at residues 23–42 (FTHAAIELNVTHSAISQHVK).

Belongs to the LysR transcriptional regulatory family.

The protein localises to the cytoplasm. Its function is as follows. This protein is a positive regulator of gene expression of cephalosporinase (AmpC). The sequence is that of HTH-type transcriptional activator AmpR (ampR) from Enterobacter cloacae.